The primary structure comprises 694 residues: Cyclic nucleotide-gated channel alpha-3 (694 aa).

Composition is skewed to polar residues over residues 1-11 (MAKINTQYSHP) and 112-123 (SQESNAQANVGS). Disordered regions lie at residues 1–24 (MAKINTQYSHPSRTHLKVKTSDRD) and 109–152 (EVSS…EEKK). At 1 to 170 (MAKINTQYSH…VDPSSNLYYR (170 aa)) the chain is on the cytoplasmic side. A helical transmembrane segment spans residues 171 to 192 (WLTAIALPVFYNWYLLICRACF). The Extracellular segment spans residues 193–198 (DELQSE). Residues 199–219 (YLMLWLVLDYSADVLYVLDVL) traverse the membrane as a helical segment. At 220-246 (VRARTGFLEQGLMVSDTNRLWQHYKTT) the chain is on the cytoplasmic side. Residues 247–266 (TQFKLDVLSLVPTDLAYLKV) form a helical membrane-spanning segment. The Extracellular portion of the chain corresponds to 267–270 (GTNY). Residues 271–288 (PEVRFNRLLKFSRLFEFF) form a helical membrane-spanning segment. Over 289-298 (DRTETRTNYP) the chain is Cytoplasmic. Residues 298 to 406 (PNMFRIGNLV…GNVGSMISNM (109 aa)) are ion conduction pathway. The chain crosses the membrane as a helical span at residues 299–321 (NMFRIGNLVLYILIIIHWNACIY). Over 322 to 347 (FAISKFIGFGTDSWVYPNISIPEHGR) the chain is Extracellular. The N-linked (GalNAc...) asparagine glycan is linked to Asn-339. 2 helical membrane-spanning segments follow: residues 348–378 (LSRKYIYSLYWSTLTLTTIGETPPPVKDEEY) and 379–403 (LFVVVDFLVGVLIFATIVGNVGSMI). Positions 365-368 (TIGE) are selectivity filter. The Cytoplasmic portion of the chain corresponds to 404 to 694 (SNMNASRAEF…DATKTEDKQQ (291 aa)). Positions 408–485 (ASRAEFQAKI…TLKKVRIFQD (78 aa)) are C-linker. Residues 488–608 (AGLLVELVLK…EEKGRQILMK (121 aa)) form a cyclic nucleotide-binding domain region. Positions 548, 549, 551, 564, 565, and 609 each coordinate 3',5'-cyclic GMP. The stretch at 626–669 (LEEKVEQLGSSLDTLQTRFARLLAEYNATQMKMKQRLSQLESQV) forms a coiled coil. The disordered stretch occupies residues 662 to 694 (LSQLESQVKGGGDKPLADGEVPGDATKTEDKQQ).

It belongs to the cyclic nucleotide-gated cation channel (TC 1.A.1.5) family. CNGA3 subfamily. In terms of assembly, forms heterotetrameric channels composed of CNGA3 and CNGB3 subunits with 3:1 stoichiometry. In terms of tissue distribution, prominently expressed in retina.

Its subcellular location is the cell membrane. It catalyses the reaction Ca(2+)(in) = Ca(2+)(out). The catalysed reaction is Na(+)(in) = Na(+)(out). It carries out the reaction K(+)(in) = K(+)(out). The enzyme catalyses NH4(+)(in) = NH4(+)(out). It catalyses the reaction Rb(+)(in) = Rb(+)(out). The catalysed reaction is Li(+)(in) = Li(+)(out). It carries out the reaction Cs(+)(in) = Cs(+)(out). Inhibited by L-cis-diltiazem. In terms of biological role, pore-forming subunit of the cone cyclic nucleotide-gated channel. Mediates cone photoresponses at bright light converting transient changes in intracellular cGMP levels into electrical signals. In the dark, cGMP levels are high and keep the channel open enabling a steady inward current carried by Na(+) and Ca(2+) ions that leads to membrane depolarization and neurotransmitter release from synaptic terminals. Upon photon absorption cGMP levels decline leading to channel closure and membrane hyperpolarization that ultimately slows neurotransmitter release and signals the presence of light, the end point of the phototransduction cascade. Pore-forming subunit of the gustatory cyclic nucleotide-gated channel. In the taste buds, may sense oral extracellular pH and conduct ion currents that modulate the excitability of taste cells. Conducts cGMP- and cAMP-gated ion currents, with permeability for monovalent and divalent cations. In Homo sapiens (Human), this protein is Cyclic nucleotide-gated channel alpha-3.